The sequence spans 661 residues: NUAK family SNF1-like kinase 1 (661 aa).

Methionine 1 bears the N-acetylmethionine mark. A disordered region spans residues 1-24 (MEGAAAPVAGDRPDLGLGAPGSPR). At serine 22 the chain carries Phosphoserine. The Protein kinase domain maps to 55 to 306 (YELQETLGKG…IEDIANHWWV (252 aa)). ATP contacts are provided by residues 61–69 (LGKGTYGKV) and lysine 84. Catalysis depends on aspartate 178, which acts as the Proton acceptor. A Phosphothreonine; by LKB1 modification is found at threonine 211. Disordered regions lie at residues 345–421 (TEAK…EGVV) and 442–570 (LPSS…RPSS). Positions 393-404 (SSKRPKGILKKR) are enriched in basic residues. A GILK motif motif is present at residues 399-402 (GILK). Serine 455 bears the Phosphoserine mark. Basic residues predominate over residues 518–529 (SCRRKGILKHSS). Serine 600 is modified (phosphoserine; by PKB/AKT1).

This sequence belongs to the protein kinase superfamily. CAMK Ser/Thr protein kinase family. SNF1 subfamily. As to quaternary structure, interacts (via GILK motif) with PPP1CB; the interaction is direct and bridges NUAK1 and PPP1R12A. Interacts with CDKN1A. Mg(2+) serves as cofactor. In terms of processing, ubiquitinated with 'Lys-29'- and 'Lys-33'-linked polyubiquitins which appear to impede LKB1-mediated phosphorylation. Deubiquitinated by USP9X. Post-translationally, phosphorylated at Thr-211 by STK11/LKB1 in complex with STE20-related adapter-alpha (STRADA) pseudo kinase and CAB39. Not dephosphorylated by the myosin PP1 complex when regulating its activity, due to the presence of PPP1R12A, which prevents myosin PP1 from dephosphorylating NUAK1. Phosphorylated by STK38L upon stimulation with IGF1. In terms of tissue distribution, expressed at high levels in heart and brain, and at lower levels in skeletal muscle, kidney, ovary, placenta, lung and liver. Highly up-regulated in colorectal cancer cell lines.

The protein localises to the nucleus. Its subcellular location is the cytoplasm. The enzyme catalyses L-seryl-[protein] + ATP = O-phospho-L-seryl-[protein] + ADP + H(+). The catalysed reaction is L-threonyl-[protein] + ATP = O-phospho-L-threonyl-[protein] + ADP + H(+). Activated by phosphorylation on Thr-211. Activated by phosphorylation at Ser-600 AKT1 during glucose starvation; the relevance of such activation in normal cells is however unsure. Functionally, serine/threonine-protein kinase involved in various processes such as cell adhesion, regulation of cell ploidy and senescence, cell proliferation and tumor progression. Phosphorylates ATM, CASP6, LATS1, PPP1R12A and p53/TP53. Acts as a regulator of cellular senescence and cellular ploidy by mediating phosphorylation of 'Ser-464' of LATS1, thereby controlling its stability. Controls cell adhesion by regulating activity of the myosin protein phosphatase 1 (PP1) complex. Acts by mediating phosphorylation of PPP1R12A subunit of myosin PP1: phosphorylated PPP1R12A then interacts with 14-3-3, leading to reduced dephosphorylation of myosin MLC2 by myosin PP1. May be involved in DNA damage response: phosphorylates p53/TP53 at 'Ser-15' and 'Ser-392' and is recruited to the CDKN1A/WAF1 promoter to participate in transcription activation by p53/TP53. May also act as a tumor malignancy-associated factor by promoting tumor invasion and metastasis under regulation and phosphorylation by AKT1. Suppresses Fas-induced apoptosis by mediating phosphorylation of CASP6, thereby suppressing the activation of the caspase and the subsequent cleavage of CFLAR. Regulates UV radiation-induced DNA damage response mediated by CDKN1A. In association with STK11, phosphorylates CDKN1A in response to UV radiation and contributes to its degradation which is necessary for optimal DNA repair. The chain is NUAK family SNF1-like kinase 1 (NUAK1) from Homo sapiens (Human).